The sequence spans 330 residues: Short chain dehydrogenase yanD (330 aa).

Residues Lys57, Asp86, Asn113, Tyr204, and Lys208 each contribute to the NADP(+) site. Catalysis depends on Tyr204, which acts as the Proton donor. The Lowers pKa of active site Tyr role is filled by Lys208.

The protein belongs to the short-chain dehydrogenases/reductases (SDR) family.

It participates in secondary metabolite biosynthesis; terpenoid biosynthesis. Functionally, short chain dehydrogenase; part of the gene cluster that mediates the biosynthesis of yanuthone D, a fungal isoprenoid epoxycyclohexenone that acts as an antibiotic against fungi and bacteria. The first step of the pathway is the synthesis of 6-methylsalicylic acid (6-MSA) by the polyketide synthase yanA. 6-MSA is then converted to m-cresol by the decarboxylase yanB. The cytochrome P450 monooxygenase yanC then catalyzes the oxidation of m-cresol to toluquinol. Epoxidation of toluquinol is then performed by the short chain dehydrogenase yanD, with the help of yanE, and a further prenylation by yanG leads to 7-deacetoxyyanuthone A. The next step is the hydroxylation of C-22 of 7-deacetoxyyanuthone A by the cytochrome P450 monooxygenase yanH to yield 22-deacetylyanuthone A. O-Mevalon transferase yanI then attaches mevalon to the hydroxyl group of 22-deacetylyanuthone A to produce yanuthone E. Finally, the FAD-dependent monooxygenase yanF oxidizes the hydroxyl group at C15 of yanuthone E to form yanuthone D. Furthermore, several branching points in the pathway lead to the production of yanuthones F and G from 7-deacetoxyyanuthone A; yanuthones H and I from 22-deacetylyanuthone A; and yanuthone J from yanuthone E. YanD is also involved in the synthesis of yanuthone X1 which does not have 6-methylsalicylic acid (6-MSA) as precursor. The sequence is that of Short chain dehydrogenase yanD from Aspergillus niger (strain ATCC 1015 / CBS 113.46 / FGSC A1144 / LSHB Ac4 / NCTC 3858a / NRRL 328 / USDA 3528.7).